Here is a 213-residue protein sequence, read N- to C-terminus: Uracil phosphoribosyltransferase (213 aa).

5-phospho-alpha-D-ribose 1-diphosphate-binding positions include Arg-78, Arg-103, and 131-139 (DPMLATGGT). Uracil contacts are provided by residues Ile-197 and 202–204 (GDA). A 5-phospho-alpha-D-ribose 1-diphosphate-binding site is contributed by Asp-203.

The protein belongs to the UPRTase family. Requires Mg(2+) as cofactor.

It catalyses the reaction UMP + diphosphate = 5-phospho-alpha-D-ribose 1-diphosphate + uracil. The protein operates within pyrimidine metabolism; UMP biosynthesis via salvage pathway; UMP from uracil: step 1/1. Allosterically activated by GTP. In terms of biological role, catalyzes the conversion of uracil and 5-phospho-alpha-D-ribose 1-diphosphate (PRPP) to UMP and diphosphate. In Bifidobacterium longum (strain DJO10A), this protein is Uracil phosphoribosyltransferase.